Here is a 428-residue protein sequence, read N- to C-terminus: Probable mitochondrial adenine nucleotide transporter BTL3 (428 aa).

Solcar repeat units follow at residues 129-212 (LNTT…YRGQ), 222-307 (TTNF…LKSA), and 336-421 (LGPM…MKVV). The next 6 membrane-spanning stretches (helical) occupy residues 132 to 152 (TKHL…IAPL), 187 to 207 (GNLV…YAYD), 228 to 248 (FVAG…LDTI), 283 to 303 (LVPS…VYDI), 342 to 362 (LLYG…FEVV), and 390 to 410 (VPAL…SAAI).

Belongs to the mitochondrial carrier (TC 2.A.29) family.

It localises to the mitochondrion inner membrane. Functionally, probable mitochondrial adenylate carrier that catalyzes the transport of ATP, ADP and AMP. In Arabidopsis thaliana (Mouse-ear cress), this protein is Probable mitochondrial adenine nucleotide transporter BTL3.